The sequence spans 57 residues: Aspartyl-phosphate phosphatase YnzD (57 aa).

It belongs to the spo0E family.

Functionally, aspartyl-phosphate phosphatase which specifically dephosphorylates the sporulation transcription factor Spo0A-P and negatively regulates the sporulation initiation pathway in order to control the proper timing of sporulation. The protein is Aspartyl-phosphate phosphatase YnzD (ynzD) of Bacillus subtilis (strain 168).